We begin with the raw amino-acid sequence, 99 residues long: Large ribosomal subunit protein bL28 (99 aa).

The protein belongs to the bacterial ribosomal protein bL28 family.

The polypeptide is Large ribosomal subunit protein bL28 (Brucella anthropi (strain ATCC 49188 / DSM 6882 / CCUG 24695 / JCM 21032 / LMG 3331 / NBRC 15819 / NCTC 12168 / Alc 37) (Ochrobactrum anthropi)).